Here is a 235-residue protein sequence, read N- to C-terminus: Urease accessory protein UreF (235 aa).

This sequence belongs to the UreF family. UreD, UreF and UreG form a complex that acts as a GTP-hydrolysis-dependent molecular chaperone, activating the urease apoprotein by helping to assemble the nickel containing metallocenter of UreC. The UreE protein probably delivers the nickel.

It localises to the cytoplasm. Functionally, required for maturation of urease via the functional incorporation of the urease nickel metallocenter. This chain is Urease accessory protein UreF, found in Psychrobacter cryohalolentis (strain ATCC BAA-1226 / DSM 17306 / VKM B-2378 / K5).